The primary structure comprises 177 residues: Tubulin beta chain (177 aa).

The tract at residues 156 to 177 is disordered; that stretch reads YQDATAEEEGEFDEEEGDEEAA. Over residues 160–177 the composition is skewed to acidic residues; it reads TAEEEGEFDEEEGDEEAA.

It belongs to the tubulin family. Dimer of alpha and beta chains. A typical microtubule is a hollow water-filled tube with an outer diameter of 25 nm and an inner diameter of 15 nM. Alpha-beta heterodimers associate head-to-tail to form protofilaments running lengthwise along the microtubule wall with the beta-tubulin subunit facing the microtubule plus end conferring a structural polarity. Microtubules usually have 13 protofilaments but different protofilament numbers can be found in some organisms and specialized cells. Mg(2+) is required as a cofactor.

It localises to the cytoplasm. Its subcellular location is the cytoskeleton. In terms of biological role, tubulin is the major constituent of microtubules, a cylinder consisting of laterally associated linear protofilaments composed of alpha- and beta-tubulin heterodimers. Microtubules grow by the addition of GTP-tubulin dimers to the microtubule end, where a stabilizing cap forms. Below the cap, tubulin dimers are in GDP-bound state, owing to GTPase activity of alpha-tubulin. The sequence is that of Tubulin beta chain from Lytechinus pictus (Painted sea urchin).